The sequence spans 305 residues: Coiled-coil domain-containing protein 69-A (305 aa).

Glycine 2 carries the N-myristoyl glycine lipid modification. The segment at 13 to 38 is disordered; sequence LRKKKRQKAHQGGLTSQELNDLNAKT. The segment covering 25-38 has biased composition (polar residues); it reads GLTSQELNDLNAKT. Residues 42-281 are a coiled coil; the sequence is NEVLQKIKEY…QREKEQNLYR (240 aa).

This sequence belongs to the CCDC69 family.

The protein localises to the cytoplasm. It is found in the cytoskeleton. Its subcellular location is the spindle. The protein resides in the midbody. In terms of biological role, may act as a scaffold to regulate the recruitment and assembly of spindle midzone components. In Xenopus laevis (African clawed frog), this protein is Coiled-coil domain-containing protein 69-A (ccdc69-a).